Consider the following 172-residue polypeptide: Small ribosomal subunit protein uS5 (172 aa).

An S5 DRBM domain is found at 11-74; the sequence is LSEVLVDVNR…QAAKKRMMKV (64 aa).

It belongs to the universal ribosomal protein uS5 family. As to quaternary structure, part of the 30S ribosomal subunit. Contacts proteins S4 and S8.

With S4 and S12 plays an important role in translational accuracy. Functionally, located at the back of the 30S subunit body where it stabilizes the conformation of the head with respect to the body. The polypeptide is Small ribosomal subunit protein uS5 (Rickettsia canadensis (strain McKiel)).